The primary structure comprises 437 residues: Adenylosuccinate lyase (437 aa).

Residues Arg-4–Tyr-5, Lys-70–Asp-72, and Thr-96–Ser-97 each bind N(6)-(1,2-dicarboxyethyl)-AMP. The active-site Proton donor/acceptor is His-144. Gln-215 serves as a coordination point for N(6)-(1,2-dicarboxyethyl)-AMP. Ser-265 functions as the Proton donor/acceptor in the catalytic mechanism. Residues Ser-266, Lys-271–Asn-273, and Ser-310–Val-314 contribute to the N(6)-(1,2-dicarboxyethyl)-AMP site.

Belongs to the lyase 1 family. Adenylosuccinate lyase subfamily. Homooligomer. Residues from neighboring subunits contribute catalytic and substrate-binding residues to each active site.

The catalysed reaction is N(6)-(1,2-dicarboxyethyl)-AMP = fumarate + AMP. The enzyme catalyses (2S)-2-[5-amino-1-(5-phospho-beta-D-ribosyl)imidazole-4-carboxamido]succinate = 5-amino-1-(5-phospho-beta-D-ribosyl)imidazole-4-carboxamide + fumarate. It functions in the pathway purine metabolism; AMP biosynthesis via de novo pathway; AMP from IMP: step 2/2. It participates in purine metabolism; IMP biosynthesis via de novo pathway; 5-amino-1-(5-phospho-D-ribosyl)imidazole-4-carboxamide from 5-amino-1-(5-phospho-D-ribosyl)imidazole-4-carboxylate: step 2/2. In terms of biological role, catalyzes two reactions in de novo purine nucleotide biosynthesis. Catalyzes the breakdown of 5-aminoimidazole- (N-succinylocarboxamide) ribotide (SAICAR or 2-[5-amino-1-(5-phospho-beta-D-ribosyl)imidazole-4-carboxamido]succinate) to 5-aminoimidazole-4-carboxamide ribotide (AICAR or 5-amino-1-(5-phospho-beta-D-ribosyl)imidazole-4-carboxamide) and fumarate, and of adenylosuccinate (ADS or N(6)-(1,2-dicarboxyethyl)-AMP) to adenosine monophosphate (AMP) and fumarate. The polypeptide is Adenylosuccinate lyase (purB) (Aquifex aeolicus (strain VF5)).